Reading from the N-terminus, the 464-residue chain is DNA primase DnaG (464 aa).

Residues aspartate 171–lysine 245 enclose the Toprim domain. Residues glutamate 177, aspartate 219, and aspartate 221 each coordinate Mg(2+).

Belongs to the archaeal DnaG primase family. In terms of assembly, forms a ternary complex with MCM helicase and DNA. The cofactor is Mg(2+).

The catalysed reaction is ssDNA + n NTP = ssDNA/pppN(pN)n-1 hybrid + (n-1) diphosphate.. In terms of biological role, RNA polymerase that catalyzes the synthesis of short RNA molecules used as primers for DNA polymerase during DNA replication. The protein is DNA primase DnaG of Methanococcus aeolicus (strain ATCC BAA-1280 / DSM 17508 / OCM 812 / Nankai-3).